The primary structure comprises 166 residues: 2-C-methyl-D-erythritol 2,4-cyclodiphosphate synthase (166 aa).

2 residues coordinate a divalent metal cation: Asp-12 and His-14. 4-CDP-2-C-methyl-D-erythritol 2-phosphate-binding positions include 12–14 (DVH) and 38–39 (HS). His-46 contributes to the a divalent metal cation binding site. 4-CDP-2-C-methyl-D-erythritol 2-phosphate contacts are provided by residues 60–62 (DIG), 136–139 (TTSE), Phe-143, and Arg-146.

The protein belongs to the IspF family. As to quaternary structure, homotrimer. A divalent metal cation serves as cofactor.

It carries out the reaction 4-CDP-2-C-methyl-D-erythritol 2-phosphate = 2-C-methyl-D-erythritol 2,4-cyclic diphosphate + CMP. It functions in the pathway isoprenoid biosynthesis; isopentenyl diphosphate biosynthesis via DXP pathway; isopentenyl diphosphate from 1-deoxy-D-xylulose 5-phosphate: step 4/6. Involved in the biosynthesis of isopentenyl diphosphate (IPP) and dimethylallyl diphosphate (DMAPP), two major building blocks of isoprenoid compounds. Catalyzes the conversion of 4-diphosphocytidyl-2-C-methyl-D-erythritol 2-phosphate (CDP-ME2P) to 2-C-methyl-D-erythritol 2,4-cyclodiphosphate (ME-CPP) with a corresponding release of cytidine 5-monophosphate (CMP). The sequence is that of 2-C-methyl-D-erythritol 2,4-cyclodiphosphate synthase from Xanthomonas axonopodis pv. citri (strain 306).